The following is an 849-amino-acid chain: Protein lap1 (849 aa).

17 LRR repeats span residues 18–39 (VIDKLDYSNTPLTDFPEVWQHE), 41–62 (TLEELYLSTTRLQALPPQLFYC), 64–85 (GLRVLHVNSNNLESIPQAIGSL), 87–108 (QLQHLDLNRNLIVNVPEEIKSC), 110–131 (HLTHLDLSCNSLQRLPDAITSL), 133–155 (SLQELLLNETYLEFLPANFGRLV), 156–177 (NLRILELRLNNLMTLPKSMVRL), 179–200 (NLQRLDIGGNEFTELPEVVGEL), 202–224 (SLRELWIDFNQIRRVSANIGKLR), 225–246 (DLQHFEANGNLLDTLPSELSNW), 248–269 (NVEVLSICSNSLEAFPFSVGML), 271–292 (SLVTFKCESNGLTELPDSISYL), 294–315 (QLEELVLSHNKLIRLPSTIGML), 317–338 (SLRFLFADDNQLRQLPDELCSC), 340–362 (QLSVLSVANNQLSALPQNIGNLS), 363–384 (KMKVLNVVNNYINALPVSMLNL), and 386–407 (NLTSMWLSDNQSQPLVPLQYLD). Residues 716–752 (NNISNNLEPNPEEEDQELDDTMSQHSLNSTATNNTSK) are disordered. The span at 725-735 (NPEEEDQELDD) shows a compositional bias: acidic residues. Residues 736–752 (TMSQHSLNSTATNNTSK) are compositionally biased toward polar residues. The region spanning 770–849 (VKQVTLKWEN…TVMNIMLSRK (80 aa)) is the PDZ domain.

It belongs to the LAP (LRR and PDZ) protein family.

Functionally, may have a role in assembling adherens junctions. This Drosophila melanogaster (Fruit fly) protein is Protein lap1.